Reading from the N-terminus, the 30-residue chain is Chassatide C3 (30 aa).

The cyclopeptide (Gly-Asn) cross-link spans 1-30 (GIPCGESCVWIPCISSALGCSCKNKVCYRN). 3 cysteine pairs are disulfide-bonded: Cys4-Cys20, Cys8-Cys22, and Cys13-Cys27.

Post-translationally, this is a cyclic peptide. Expressed in fruit, pedicel, stem and root but not in leaf (at protein level).

Its function is as follows. Probably participates in a plant defense mechanism. The protein is Chassatide C3 of Chassalia chartacea (Chassalia curviflora).